We begin with the raw amino-acid sequence, 410 residues long: Multifunctional CCA protein (410 aa).

The ATP site is built by Gly8 and Arg11. 2 residues coordinate CTP: Gly8 and Arg11. The Mg(2+) site is built by Asp21 and Asp23. ATP-binding residues include Arg91, Arg137, and Arg140. CTP contacts are provided by Arg91, Arg137, and Arg140. The 102-residue stretch at 225-326 (SGIHTLMTLQ…LNVLKKTDAF (102 aa)) folds into the HD domain.

It belongs to the tRNA nucleotidyltransferase/poly(A) polymerase family. Bacterial CCA-adding enzyme type 1 subfamily. In terms of assembly, monomer. Can also form homodimers and oligomers. It depends on Mg(2+) as a cofactor. The cofactor is Ni(2+).

The enzyme catalyses a tRNA precursor + 2 CTP + ATP = a tRNA with a 3' CCA end + 3 diphosphate. It carries out the reaction a tRNA with a 3' CCA end + 2 CTP + ATP = a tRNA with a 3' CCACCA end + 3 diphosphate. Catalyzes the addition and repair of the essential 3'-terminal CCA sequence in tRNAs without using a nucleic acid template. Adds these three nucleotides in the order of C, C, and A to the tRNA nucleotide-73, using CTP and ATP as substrates and producing inorganic pyrophosphate. tRNA 3'-terminal CCA addition is required both for tRNA processing and repair. Also involved in tRNA surveillance by mediating tandem CCA addition to generate a CCACCA at the 3' terminus of unstable tRNAs. While stable tRNAs receive only 3'-terminal CCA, unstable tRNAs are marked with CCACCA and rapidly degraded. The polypeptide is Multifunctional CCA protein (Neisseria gonorrhoeae (strain ATCC 700825 / FA 1090)).